The primary structure comprises 119 residues: MNLLIDKITKDQLRSDIPEFRAGDTVRVHAKVVEGDHERIQLFEGVVIKRHGSGISATYTVRKISNGVGVERTFPLHSPRVAKIEVIRHGRVRRAKLYYLRALHGKAARIKEDRRKAFK.

It belongs to the bacterial ribosomal protein bL19 family.

Its function is as follows. This protein is located at the 30S-50S ribosomal subunit interface and may play a role in the structure and function of the aminoacyl-tRNA binding site. The chain is Large ribosomal subunit protein bL19 from Pediococcus pentosaceus (strain ATCC 25745 / CCUG 21536 / LMG 10740 / 183-1w).